A 163-amino-acid chain; its full sequence is Large ribosomal subunit protein uL10 (163 aa).

It belongs to the universal ribosomal protein uL10 family. Part of the ribosomal stalk of the 50S ribosomal subunit. The N-terminus interacts with L11 and the large rRNA to form the base of the stalk. The C-terminus forms an elongated spine to which L12 dimers bind in a sequential fashion forming a multimeric L10(L12)X complex.

In terms of biological role, forms part of the ribosomal stalk, playing a central role in the interaction of the ribosome with GTP-bound translation factors. The protein is Large ribosomal subunit protein uL10 (rplJ) of Pasteurella multocida (strain Pm70).